We begin with the raw amino-acid sequence, 167 residues long: Protein tyrosine phosphatase type IVA 2 (167 aa).

The Tyrosine-protein phosphatase domain occupies alanine 5–arginine 158. A disulfide bridge connects residues cysteine 46 and cysteine 101. Catalysis depends on aspartate 69, which acts as the Proton donor. Cysteine 101 serves as the catalytic Phosphocysteine intermediate. Valine 102–arginine 107 is a phosphate binding site. Position 107 (arginine 107) interacts with substrate. Cysteine 164 carries the post-translational modification Cysteine methyl ester. Cysteine 164 carries S-farnesyl cysteine lipidation. Residues cysteine 165–glutamine 167 constitute a propeptide, removed in mature form.

This sequence belongs to the protein-tyrosine phosphatase family. In contrast to PTP4A1 and PTP4A3, does not interact with tubulin. Interacts with RABGGTB. Farnesylated. Farnesylation is required for membrane targeting and for interaction with RABGGTB. In terms of tissue distribution, expressed in skeletal muscle, and at lower levels in liver, lung, heart, kidney, brain, testis and spleen.

The protein resides in the cell membrane. Its subcellular location is the early endosome. It localises to the cytoplasm. It carries out the reaction O-phospho-L-tyrosyl-[protein] + H2O = L-tyrosyl-[protein] + phosphate. Inhibited by sodium orthovanadate and pentamidine. In terms of biological role, protein tyrosine phosphatase which stimulates progression from G1 into S phase during mitosis. Inhibits geranylgeranyl transferase type II activity by blocking the association between RABGGTA and RABGGTB. The polypeptide is Protein tyrosine phosphatase type IVA 2 (Ptp4a2) (Mus musculus (Mouse)).